The primary structure comprises 417 residues: Serine hydroxymethyltransferase (417 aa).

Residues Leu121 and 125–127 (GHL) each bind (6S)-5,6,7,8-tetrahydrofolate. Lys229 carries the post-translational modification N6-(pyridoxal phosphate)lysine. A (6S)-5,6,7,8-tetrahydrofolate-binding site is contributed by 355–357 (SPF).

The protein belongs to the SHMT family. Homodimer. Pyridoxal 5'-phosphate is required as a cofactor.

The protein resides in the cytoplasm. It carries out the reaction (6R)-5,10-methylene-5,6,7,8-tetrahydrofolate + glycine + H2O = (6S)-5,6,7,8-tetrahydrofolate + L-serine. It functions in the pathway one-carbon metabolism; tetrahydrofolate interconversion. The protein operates within amino-acid biosynthesis; glycine biosynthesis; glycine from L-serine: step 1/1. In terms of biological role, catalyzes the reversible interconversion of serine and glycine with tetrahydrofolate (THF) serving as the one-carbon carrier. This reaction serves as the major source of one-carbon groups required for the biosynthesis of purines, thymidylate, methionine, and other important biomolecules. Also exhibits THF-independent aldolase activity toward beta-hydroxyamino acids, producing glycine and aldehydes, via a retro-aldol mechanism. The chain is Serine hydroxymethyltransferase from Shewanella frigidimarina (strain NCIMB 400).